The following is a 384-amino-acid chain: 1-deoxy-D-xylulose 5-phosphate reductoisomerase (384 aa).

NADPH contacts are provided by T10, G11, S12, I13, N38, and N120. A 1-deoxy-D-xylulose 5-phosphate-binding site is contributed by K121. E122 is a binding site for NADPH. Mn(2+) is bound at residue D146. Residues S147, E148, S172, and H195 each coordinate 1-deoxy-D-xylulose 5-phosphate. Mn(2+) is bound at residue E148. G201 is a binding site for NADPH. 1-deoxy-D-xylulose 5-phosphate contacts are provided by S208, N213, K214, and E217. Mn(2+) is bound at residue E217.

The protein belongs to the DXR family. Mg(2+) is required as a cofactor. It depends on Mn(2+) as a cofactor.

It catalyses the reaction 2-C-methyl-D-erythritol 4-phosphate + NADP(+) = 1-deoxy-D-xylulose 5-phosphate + NADPH + H(+). It functions in the pathway isoprenoid biosynthesis; isopentenyl diphosphate biosynthesis via DXP pathway; isopentenyl diphosphate from 1-deoxy-D-xylulose 5-phosphate: step 1/6. Its function is as follows. Catalyzes the NADPH-dependent rearrangement and reduction of 1-deoxy-D-xylulose-5-phosphate (DXP) to 2-C-methyl-D-erythritol 4-phosphate (MEP). This Protochlamydia amoebophila (strain UWE25) protein is 1-deoxy-D-xylulose 5-phosphate reductoisomerase.